A 494-amino-acid polypeptide reads, in one-letter code: Probable malate:quinone oxidoreductase 3 (494 aa).

It belongs to the MQO family. FAD is required as a cofactor.

The catalysed reaction is (S)-malate + a quinone = a quinol + oxaloacetate. Its pathway is carbohydrate metabolism; tricarboxylic acid cycle; oxaloacetate from (S)-malate (quinone route): step 1/1. The chain is Probable malate:quinone oxidoreductase 3 from Staphylococcus epidermidis (strain ATCC 12228 / FDA PCI 1200).